The primary structure comprises 416 residues: MARINDHFLKLKTGYLFPEIARRVQAFATAHPEAQIIKMGIGDVTEPLPEACRTAMIRAVEEMGERATFRGYGPEQGYEWLRQAIARHDFQARNCDIDASEIFVSDGSKCDCGNILDILGHDNTIAITDPVYPVYVDTNVMAGHTGPANERGEYEGLVYLPITAENHFTASLPSQKVDVIYLCFPNNPTGAVATREHLQNWVDYARAHGSLILFDAAYEAYITEPGIPHSIYEIPGARECAIEFRSFSKTAGFTGTRCAFTVVPKSLRGQAADGSWVDLWSLWYRRQSTKFNGVSYIVQRGAEAVYSEAGQAQVQGLVQFYLENARIIRQQLAEVGIQVYGGVNAPYVWVKTPDGLSSWEFFDKLLHTCHVVGTPGSGFGSAGEGYLRLSAFNSRANVEEAMRRIGSVFAGAGAVG.

The substrate site is built by tyrosine 15 and glycine 42. Residues tyrosine 72, 108 to 109 (SK), tyrosine 132, asparagine 187, tyrosine 218, and 246 to 248 (SFS) each bind pyridoxal 5'-phosphate. Residues lysine 109, tyrosine 132, and asparagine 187 each contribute to the substrate site. Position 249 is an N6-(pyridoxal phosphate)lysine (lysine 249). Residues arginine 257 and asparagine 292 each contribute to the pyridoxal 5'-phosphate site. Residues asparagine 292 and arginine 388 each contribute to the substrate site.

It belongs to the class-I pyridoxal-phosphate-dependent aminotransferase family. LL-diaminopimelate aminotransferase subfamily. As to quaternary structure, homodimer. It depends on pyridoxal 5'-phosphate as a cofactor.

It catalyses the reaction (2S,6S)-2,6-diaminopimelate + 2-oxoglutarate = (S)-2,3,4,5-tetrahydrodipicolinate + L-glutamate + H2O + H(+). Its pathway is amino-acid biosynthesis; L-lysine biosynthesis via DAP pathway; LL-2,6-diaminopimelate from (S)-tetrahydrodipicolinate (aminotransferase route): step 1/1. Involved in the synthesis of meso-diaminopimelate (m-DAP or DL-DAP), required for both lysine and peptidoglycan biosynthesis. Catalyzes the direct conversion of tetrahydrodipicolinate to LL-diaminopimelate. This is LL-diaminopimelate aminotransferase from Synechococcus sp. (strain JA-2-3B'a(2-13)) (Cyanobacteria bacterium Yellowstone B-Prime).